A 372-amino-acid chain; its full sequence is Homoserine dehydrogenase (372 aa).

NAD(+) is bound by residues valine 13, glycine 15, valine 16, and threonine 99. NADP(+) contacts are provided by valine 16 and threonine 99. NADPH-binding residues include valine 16, threonine 99, serine 100, and lysine 123. Lysine 123 is a binding site for NADP(+). Positions 150, 153, 155, and 157 each coordinate Na(+). The NADP(+) site is built by glycine 216 and glutamate 219. The L-homoserine site is built by glutamate 219 and aspartate 230. Lysine 234 acts as the Proton donor in catalysis. An NAD(+)-binding site is contributed by glycine 352. Glycine 352 contributes to the NADP(+) binding site. Glycine 352 contacts NADPH.

This sequence belongs to the homoserine dehydrogenase family. As to quaternary structure, homodimer. A metal cation serves as cofactor.

It carries out the reaction L-homoserine + NADP(+) = L-aspartate 4-semialdehyde + NADPH + H(+). It catalyses the reaction L-homoserine + NAD(+) = L-aspartate 4-semialdehyde + NADH + H(+). Its pathway is amino-acid biosynthesis; L-methionine biosynthesis via de novo pathway; L-homoserine from L-aspartate: step 3/3. It functions in the pathway amino-acid biosynthesis; L-threonine biosynthesis; L-threonine from L-aspartate: step 3/5. Functionally, catalyzes the conversion of L-aspartate-beta-semialdehyde (L-Asa) to L-homoserine (L-Hse), the third step in the biosynthesis of amino acids that derive from aspartate (the aspartate family of amino acids), including methioinine and threonine, the latter of which is a precursor to isoleucine; production of homoserine leads to a branch-point in the pathway as it can either be O-phosphorylated for processing to threonine, or O-acylated for processing to methionine. This Paracoccidioides brasiliensis (strain Pb18) protein is Homoserine dehydrogenase.